Here is a 515-residue protein sequence, read N- to C-terminus: Maturase K (515 aa).

The protein belongs to the intron maturase 2 family. MatK subfamily.

The protein resides in the plastid. The protein localises to the chloroplast. In terms of biological role, usually encoded in the trnK tRNA gene intron. Probably assists in splicing its own and other chloroplast group II introns. This Pinus koraiensis (Korean pine) protein is Maturase K.